We begin with the raw amino-acid sequence, 352 residues long: DNA polymerase IV (352 aa).

In terms of domain architecture, UmuC spans 6–186 (IIHIDMDAFY…LPLGKIPGVG (181 aa)). D10 and D104 together coordinate Mg(2+). Residue E105 is part of the active site.

The protein belongs to the DNA polymerase type-Y family. Monomer. Requires Mg(2+) as cofactor.

The protein localises to the cytoplasm. It catalyses the reaction DNA(n) + a 2'-deoxyribonucleoside 5'-triphosphate = DNA(n+1) + diphosphate. Poorly processive, error-prone DNA polymerase involved in untargeted mutagenesis. Copies undamaged DNA at stalled replication forks, which arise in vivo from mismatched or misaligned primer ends. These misaligned primers can be extended by PolIV. Exhibits no 3'-5' exonuclease (proofreading) activity. May be involved in translesional synthesis, in conjunction with the beta clamp from PolIII. The protein is DNA polymerase IV of Neisseria meningitidis serogroup C / serotype 2a (strain ATCC 700532 / DSM 15464 / FAM18).